Reading from the N-terminus, the 343-residue chain is Aspartate carbamoyltransferase catalytic subunit (343 aa).

Residues Arg91 and Thr92 each coordinate carbamoyl phosphate. An L-aspartate-binding site is contributed by Lys119. Positions 141, 171, and 174 each coordinate carbamoyl phosphate. Arg204 and Arg259 together coordinate L-aspartate. Carbamoyl phosphate contacts are provided by Gly300 and Pro301.

Belongs to the aspartate/ornithine carbamoyltransferase superfamily. ATCase family. Heterododecamer (2C3:3R2) of six catalytic PyrB chains organized as two trimers (C3), and six regulatory PyrI chains organized as three dimers (R2).

It catalyses the reaction carbamoyl phosphate + L-aspartate = N-carbamoyl-L-aspartate + phosphate + H(+). Its pathway is pyrimidine metabolism; UMP biosynthesis via de novo pathway; (S)-dihydroorotate from bicarbonate: step 2/3. Functionally, catalyzes the condensation of carbamoyl phosphate and aspartate to form carbamoyl aspartate and inorganic phosphate, the committed step in the de novo pyrimidine nucleotide biosynthesis pathway. The sequence is that of Aspartate carbamoyltransferase catalytic subunit from Burkholderia multivorans (strain ATCC 17616 / 249).